Here is a 167-residue protein sequence, read N- to C-terminus: 16S rRNA aminocarboxypropyltransferase (167 aa).

S-adenosyl-L-methionine is bound by residues T17, V62, L84, Y99, and S103.

Belongs to the TDD superfamily. TSR3 family.

It localises to the cytoplasm. The enzyme catalyses an N(1)-methylpseudouridine in rRNA + S-adenosyl-L-methionine = N(1)-methyl-N(3)-[(3S)-3-amino-3-carboxypropyl]pseudouridine in rRNA + S-methyl-5'-thioadenosine + H(+). Its function is as follows. Aminocarboxypropyltransferase that catalyzes the aminocarboxypropyl transfer on pseudouridine corresponding to position 914 in M.jannaschii 16S rRNA. It constitutes the last step in biosynthesis of the hypermodified N1-methyl-N3-(3-amino-3-carboxypropyl) pseudouridine (m1acp3-Psi). The sequence is that of 16S rRNA aminocarboxypropyltransferase from Sulfurisphaera tokodaii (strain DSM 16993 / JCM 10545 / NBRC 100140 / 7) (Sulfolobus tokodaii).